Reading from the N-terminus, the 341-residue chain is Methionine import ATP-binding protein MetN 2 (341 aa).

An ABC transporter domain is found at 2 to 241 (INLQNVSKIY…PKEEMTKRFV (240 aa)). Residue 38 to 45 (GYSGAGKS) participates in ATP binding.

The protein belongs to the ABC transporter superfamily. Methionine importer (TC 3.A.1.24) family. The complex is composed of two ATP-binding proteins (MetN), two transmembrane proteins (MetI) and a solute-binding protein (MetQ).

The protein localises to the cell membrane. It carries out the reaction L-methionine(out) + ATP + H2O = L-methionine(in) + ADP + phosphate + H(+). The catalysed reaction is D-methionine(out) + ATP + H2O = D-methionine(in) + ADP + phosphate + H(+). Functionally, part of the ABC transporter complex MetNIQ involved in methionine import. Responsible for energy coupling to the transport system. In Bacillus licheniformis (strain ATCC 14580 / DSM 13 / JCM 2505 / CCUG 7422 / NBRC 12200 / NCIMB 9375 / NCTC 10341 / NRRL NRS-1264 / Gibson 46), this protein is Methionine import ATP-binding protein MetN 2.